Here is a 394-residue protein sequence, read N- to C-terminus: THAP domain-containing protein 5 (394 aa).

The THAP-type zinc-finger motif lies at 1-84; the sequence is MPRYCAAICC…LKQTAIPTIF (84 aa). The segment at 86–109 is disordered; sequence LPEDNQEKDPSKKKSQKKKLKSEK. The short motif at 320 to 323 is the HCFC1-binding motif (HBM) element; it reads EHSY. Residues 347-381 adopt a coiled-coil conformation; it reads LELQEQQTLGRLKSLEALIRQLKQENWLSEENVKI.

As to quaternary structure, interacts with HTRA2; under apoptotic conditions. Interacts with ABRAXAS2. Post-translationally, cleaved by HTRA2 during apoptosis.

The protein resides in the nucleus. Has sequence-specific DNA-binding activity and can function as transcriptional repressor (in vitro). May be a regulator of cell cycle: THAP5 overexpression in human cell lines causes cell cycle arrest at G2/M phase. The chain is THAP domain-containing protein 5 (THAP5) from Bos taurus (Bovine).